The primary structure comprises 100 residues: Urease subunit gamma (100 aa).

It belongs to the urease gamma subunit family. As to quaternary structure, heterotrimer of UreA (gamma), UreB (beta) and UreC (alpha) subunits. Three heterotrimers associate to form the active enzyme.

It is found in the cytoplasm. The enzyme catalyses urea + 2 H2O + H(+) = hydrogencarbonate + 2 NH4(+). It participates in nitrogen metabolism; urea degradation; CO(2) and NH(3) from urea (urease route): step 1/1. This is Urease subunit gamma from Pseudomonas entomophila (strain L48).